The following is a 235-amino-acid chain: 1-Cys peroxiredoxin (235 aa).

The Thioredoxin domain occupies 5–179 (ILLGDKFPDF…ILRVVDSLQL (175 aa)). C49 is a catalytic residue. C49 serves as the catalytic Cysteine sulfenic acid (-SOH) intermediate.

It belongs to the peroxiredoxin family. Prx6 subfamily.

Its subcellular location is the cytoplasm. It carries out the reaction a hydroperoxide + [protein]-dithiol = [protein]-disulfide + an alcohol + H2O. Functionally, thiol-specific peroxidase that catalyzes the reduction of hydrogen peroxide and organic hydroperoxides to water and alcohols, respectively. Plays a role in cell protection against oxidative stress by detoxifying peroxides. The polypeptide is 1-Cys peroxiredoxin (Dirofilaria immitis (Canine heartworm)).